The following is a 137-amino-acid chain: Seminal plasma sperm motility inhibitor (137 aa).

A signal peptide spans 1-21 (MKLGSAIPWALLLSTXTLVST). A disulfide bridge connects residues C30 and C51. Residues 30–131 (CGGFLKNYSG…SSFNVYFYGI (102 aa)) form the CUB domain. N-linked (GlcNAc...) asparagine glycosylation occurs at N36.

Belongs to the spermadhesin family. In terms of tissue distribution, seminal plasma or sperm.

It is found in the secreted. Inhibitor of sperm motility. This is Seminal plasma sperm motility inhibitor (SPMI) from Sus scrofa (Pig).